We begin with the raw amino-acid sequence, 344 residues long: Phenylalanine--tRNA ligase alpha subunit (344 aa).

A Mg(2+)-binding site is contributed by Glu-256.

It belongs to the class-II aminoacyl-tRNA synthetase family. Phe-tRNA synthetase alpha subunit type 1 subfamily. As to quaternary structure, tetramer of two alpha and two beta subunits. Mg(2+) is required as a cofactor.

The protein resides in the cytoplasm. The enzyme catalyses tRNA(Phe) + L-phenylalanine + ATP = L-phenylalanyl-tRNA(Phe) + AMP + diphosphate + H(+). This is Phenylalanine--tRNA ligase alpha subunit from Bacillus pumilus (strain SAFR-032).